Consider the following 396-residue polypeptide: Phosphoglycerate kinase (396 aa).

Residues 21-23, Arg36, 59-62, Arg119, and Arg156 contribute to the substrate site; these read DFN and HLGK. Residues Lys206, Glu325, and 352–355 contribute to the ATP site; that span reads GGDS.

It belongs to the phosphoglycerate kinase family. In terms of assembly, monomer.

The protein resides in the cytoplasm. It carries out the reaction (2R)-3-phosphoglycerate + ATP = (2R)-3-phospho-glyceroyl phosphate + ADP. Its pathway is carbohydrate degradation; glycolysis; pyruvate from D-glyceraldehyde 3-phosphate: step 2/5. The sequence is that of Phosphoglycerate kinase from Staphylococcus epidermidis (strain ATCC 35984 / DSM 28319 / BCRC 17069 / CCUG 31568 / BM 3577 / RP62A).